Reading from the N-terminus, the 201-residue chain is Putative ankyrin repeat protein YahD (201 aa).

6 ANK repeats span residues 5-34, 38-67, 71-100, 104-134, 138-172, and 176-201; these read NLPA…DINT, QGKT…DINK, TCLN…DLNC, FGGV…NVNQ, VGWT…SPHL, and YGKT…AAGA.

This chain is Putative ankyrin repeat protein YahD (yahD), found in Escherichia coli (strain K12).